The primary structure comprises 336 residues: Methionyl-tRNA formyltransferase (336 aa).

110 to 113 (SLLP) provides a ligand contact to (6S)-5,6,7,8-tetrahydrofolate.

It belongs to the Fmt family.

The enzyme catalyses L-methionyl-tRNA(fMet) + (6R)-10-formyltetrahydrofolate = N-formyl-L-methionyl-tRNA(fMet) + (6S)-5,6,7,8-tetrahydrofolate + H(+). Functionally, attaches a formyl group to the free amino group of methionyl-tRNA(fMet). The formyl group appears to play a dual role in the initiator identity of N-formylmethionyl-tRNA by promoting its recognition by IF2 and preventing the misappropriation of this tRNA by the elongation apparatus. This is Methionyl-tRNA formyltransferase from Prochlorococcus marinus (strain NATL2A).